Reading from the N-terminus, the 136-residue chain is Small ribosomal subunit protein uS9 (136 aa).

Positions 96-136 (LSPDNRKPLKTEGHLSRDPRAKERRKYGLKKARKAPQFSKR) are disordered. Over residues 98-116 (PDNRKPLKTEGHLSRDPRA) the composition is skewed to basic and acidic residues. Residues 117 to 136 (KERRKYGLKKARKAPQFSKR) are compositionally biased toward basic residues.

The protein belongs to the universal ribosomal protein uS9 family.

This chain is Small ribosomal subunit protein uS9, found in Prochlorococcus marinus (strain MIT 9515).